Reading from the N-terminus, the 177-residue chain is Large ribosomal subunit protein uL6 (177 aa).

This sequence belongs to the universal ribosomal protein uL6 family. Part of the 50S ribosomal subunit.

Functionally, this protein binds to the 23S rRNA, and is important in its secondary structure. It is located near the subunit interface in the base of the L7/L12 stalk, and near the tRNA binding site of the peptidyltransferase center. This is Large ribosomal subunit protein uL6 from Brucella melitensis biotype 1 (strain ATCC 23456 / CCUG 17765 / NCTC 10094 / 16M).